The primary structure comprises 348 residues: Nuclear receptor subfamily 1 group I member 3 (348 aa).

A DNA-binding region (nuclear receptor) is located at residues 8–83 (PRSCMVCGDR…AGMKKEMILS (76 aa)). The NR C4-type zinc finger occupies 11–31 (CMVCGDRATGYHFHALTCEGC). Thr38 carries the phosphothreonine; by PKC modification. An NR C4-type zinc finger spans residues 47 to 71 (CPFAGNCKVNKAQRRHCPACRLQKC). One can recognise an NR LBD domain in the interval 109 to 348 (GQQELVQTLL…MMPLLQEICS (240 aa)).

It belongs to the nuclear hormone receptor family. NR1 subfamily. As to quaternary structure, heterodimer of NR1I3 and RXR. Interacts with PSMC4. Interacts with ECT2. Directly interacts with DNAJC7; this complex may also include HSP90. Interacts with CRY1. Interacts with CRY2 in a ligand-dependent manner. Phosphorylated at Thr-38 by PKC, dephosphorylation of Thr-38 is required for nuclear translocation and activation.

The protein resides in the nucleus. It is found in the cytoplasm. It localises to the cytoskeleton. In terms of biological role, binds and transactivates the retinoic acid response elements that control expression of the retinoic acid receptor beta 2 and alcohol dehydrogenase 3 genes. Transactivates both the phenobarbital responsive element module of the human CYP2B6 gene and the CYP3A4 xenobiotic response element. The protein is Nuclear receptor subfamily 1 group I member 3 (NR1I3) of Callorhinus ursinus (Northern fur seal).